A 240-amino-acid chain; its full sequence is Probable septum site-determining protein MinC (240 aa).

This sequence belongs to the MinC family. As to quaternary structure, interacts with MinD and FtsZ.

Its function is as follows. Cell division inhibitor that blocks the formation of polar Z ring septums. Rapidly oscillates between the poles of the cell to destabilize FtsZ filaments that have formed before they mature into polar Z rings. Prevents FtsZ polymerization. In Acinetobacter baylyi (strain ATCC 33305 / BD413 / ADP1), this protein is Probable septum site-determining protein MinC.